The chain runs to 78 residues: Putative defensin-like protein 288 (78 aa).

Residues 1-21 (MSNLRLTIAVFLAALFQTLWW) form the signal peptide.

The protein belongs to the DEFL family.

The protein localises to the secreted. This Arabidopsis thaliana (Mouse-ear cress) protein is Putative defensin-like protein 288.